Here is a 185-residue protein sequence, read N- to C-terminus: Homeobox expressed in ES cells 1 (185 aa).

A DNA-binding region (homeobox) is located at residues 108–167; the sequence is GRRPRTAFTQNQIEVLENVFRVNCYPGIDIREDLAQKLNLEEDRIQIWFQNRRAKLKRSH.

Belongs to the ANF homeobox family. Can form heterodimers with PROP1 in binding to DNA. Interacts with TLE1.

The protein localises to the nucleus. Required for the normal development of the forebrain, eyes and other anterior structures such as the olfactory placodes and pituitary gland. Possible transcriptional repressor. Binds to the palindromic PIII sequence, 5'-AGCTTGAGTCTAATTGAATTAACTGTAC-3'. HESX1 and PROP1 bind as heterodimers on this palindromic site, and, in vitro, HESX1 can antagonize PROP1 activation. The sequence is that of Homeobox expressed in ES cells 1 (HESX1) from Pan troglodytes (Chimpanzee).